We begin with the raw amino-acid sequence, 147 residues long: Hemoglobin subunit beta-3 (147 aa).

The region spanning 3-147 is the Globin domain; that stretch reads HWTAEEKAVI…LVDALSHSYH (145 aa). The heme b site is built by H64 and H93.

The protein belongs to the globin family. As to quaternary structure, heterotetramer of two alpha chains and two beta chains. As to expression, red blood cells.

In terms of biological role, this is a tadpole (larval) beta chain. In Aquarana catesbeiana (American bullfrog), this protein is Hemoglobin subunit beta-3.